The sequence spans 656 residues: Leucine aminopeptidase 2 (656 aa).

Substrate is bound by residues 173–175 (QLE) and 302–307 (PYGGME). Residue histidine 331 participates in Zn(2+) binding. The active-site Proton acceptor is the glutamate 332. Zn(2+) is bound by residues histidine 335 and glutamate 354. The Proton donor role is filled by tyrosine 420.

Belongs to the peptidase M1 family. Zn(2+) serves as cofactor.

It localises to the cytoplasm. Its subcellular location is the nucleus. It carries out the reaction an epoxide + H2O = an ethanediol. In terms of biological role, aminopeptidase that preferentially cleaves di- and tripeptides. Also has low epoxide hydrolase activity (in vitro). Can hydrolyze the epoxide leukotriene LTA(4) but it forms preferentially 5,6-dihydroxy-7,9,11,14-eicosatetraenoic acid rather than the cytokine leukotriene B(4) as the product compared to the homologous mammalian enzyme (in vitro). This is Leucine aminopeptidase 2 from Vanderwaltozyma polyspora (strain ATCC 22028 / DSM 70294 / BCRC 21397 / CBS 2163 / NBRC 10782 / NRRL Y-8283 / UCD 57-17) (Kluyveromyces polysporus).